The following is a 968-amino-acid chain: Probable histidine kinase 1 (968 aa).

2 coiled-coil regions span residues 89 to 120 and 169 to 204; these read LLKE…FQDE and KERA…QSHT. Positions 372 to 655 constitute a Histidine kinase domain; that stretch reads TMSHEIRSPL…TFSFVLPCKI (284 aa). His-375 is subject to Phosphohistidine; by autocatalysis. The tract at residues 737–757 is disordered; the sequence is STNSASTAHQSNGPSVSRTNK. Residues 738–754 are compositionally biased toward polar residues; the sequence is TNSASTAHQSNGPSVSR. In terms of domain architecture, Response regulatory spans 818-965; sequence KILLVEDNKV…NIKECLQQYL (148 aa). Position 867 is a 4-aspartylphosphate (Asp-867).

In terms of processing, activation probably requires a transfer of a phosphate group between a His in the transmitter domain and an Asp of the receiver domain.

The enzyme catalyses ATP + protein L-histidine = ADP + protein N-phospho-L-histidine.. Its function is as follows. Cytokinin receptor related to bacterial two-component regulators. Functions as a histidine kinase and transmits the stress signal to a downstream MAPK cascade. In Oryza sativa subsp. indica (Rice), this protein is Probable histidine kinase 1.